Consider the following 820-residue polypeptide: Trimethylamine-N-oxide reductase (820 aa).

Positions Met-1–Ala-33 form a signal peptide, tat-type signal. Ser-179 contributes to the Mo-bis(molybdopterin guanine dinucleotide) binding site.

It belongs to the prokaryotic molybdopterin-containing oxidoreductase family. Mo-bis(molybdopterin guanine dinucleotide) serves as cofactor. Predicted to be exported by the Tat system. The position of the signal peptide cleavage has not been experimentally proven.

Its subcellular location is the periplasm. The enzyme catalyses trimethylamine + 2 Fe(III)-[cytochrome c] + H2O = trimethylamine N-oxide + 2 Fe(II)-[cytochrome c] + 3 H(+). In terms of biological role, reduces trimethylamine-N-oxide (TMAO) into trimethylamine; an anaerobic reaction coupled to energy-yielding reactions. The protein is Trimethylamine-N-oxide reductase (torA) of Vibrio vulnificus (strain CMCP6).